We begin with the raw amino-acid sequence, 497 residues long: Reticulophagy regulator 1 (497 aa).

The interval 1–51 is disordered; it reads MASPAPPEHAEEGCPAPAAEEQAPPSPPPPQASPAERQQQEEEAQEAGAAE. Over 1–59 the chain is Cytoplasmic; sequence MASPAPPEHAEEGCPAPAAEEQAPPSPPPPQASPAERQQQEEEAQEAGAAEGAGLQVEE. Low complexity predominate over residues 13-23; it reads GCPAPAAEEQA. The helical transmembrane segment at 60 to 80 threads the bilayer; that stretch reads AAGRAAAAVTWLLGEPVLWLG. The Lumenal portion of the chain corresponds to 81 to 95; sequence CRADELLSWKRPLRS. The tract at residues 84–233 is reticulon homology domain; the sequence is DELLSWKRPL…LLCAFLCPLF (150 aa). Residues 96-116 traverse the membrane as a helical segment; sequence LLGFVAANLLFWFLALTPWRV. Residues 117 to 118 are Cytoplasmic-facing; it reads YH. Residues 119–139 traverse the membrane as a helical segment; that stretch reads LISVMILGRVIMQIIKDMVLS. Residues 140 to 208 are Lumenal-facing; sequence RTRGAQLWRS…LVCSVCTFFT (69 aa). The residue at position 149 (Ser149) is a Phosphoserine. At Ser151 the chain carries Phosphoserine; by CAMK2B. Ser153 is subject to Phosphoserine. A helical transmembrane segment spans residues 209-229; it reads ILGSYIPGVILSYLLLLCAFL. Topologically, residues 230–497 are cytoplasmic; it reads CPLFKCNDIG…GFLSNLLGGH (268 aa). Over residues 319 to 330 the composition is skewed to polar residues; it reads FNLSEGYTPQTD. Disordered regions lie at residues 319–365, 377–396, 436–455, and 468–497; these read FNLS…EDEL, KEQL…AAGL, LSQA…GDDF, and SELG…LGGH. 2 stretches are compositionally biased toward basic and acidic residues: residues 334–348 and 377–388; these read DLDR…RDLS and KEQLDSGHRPSK. Over residues 443-455 the composition is skewed to acidic residues; that stretch reads PEEDTDTEEGDDF. The LIR motif signature appears at 453-458; it reads DDFELL. Residues 471-490 are compositionally biased toward polar residues; it reads GLTQDQEAEAQQNKKSSGFL.

Belongs to the RETREG family. As to quaternary structure, homooligomer; oligomerization is enhanced following endoplasmic reticulum stress and is mediated by the reticulon homology domain. Interacts with ATG8 family modifier proteins MAP1LC3A, MAP1LC3B, MAP1LC3C, GABARAP, GABARAPL1 and GABARAPL2. Shows higher affinity for GABARAPL1 than for MAP1LC3A or MAP1LC3B. Post-translationally, phosphorylation at Ser-151 by CAMK2B enhances oligomerization and membrane scission and reticulophagy activity. As to expression, overexpressed in esophageal squamous cell carcinoma.

The protein localises to the golgi apparatus. Its subcellular location is the cis-Golgi network membrane. The protein resides in the endoplasmic reticulum membrane. Its function is as follows. Endoplasmic reticulum (ER)-anchored autophagy regulator which mediates ER delivery into lysosomes through sequestration into autophagosomes. Promotes membrane remodeling and ER scission via its membrane bending capacity and targets the fragments into autophagosomes via interaction with ATG8 family proteins. Active under basal conditions. Required for collagen quality control in a LIR motif-dependent manner. Required for long-term survival of nociceptive and autonomic ganglion neurons. Functionally, (Microbial infection) During SARS-CoV-2 infection, RETREG1-mediated reticulophagy is promoted by SARS-CoV-2 ORF3A protein. This induces endoplasmic reticulum stress and inflammatory responses and facilitates viral infection. The chain is Reticulophagy regulator 1 from Homo sapiens (Human).